The chain runs to 798 residues: Gelsolin (798 aa).

An N-terminal signal peptide occupies residues 1-28 (MDASGAATMAVLSSLLVFLALSSSLCSA). Positions 57 to 181 (RVMHPSFANA…YEQGGVGTGF (125 aa)) are actin-severing. Residues 78–131 (ENFEPVIYPKTNYGKFYTGDSFIVLNTIENKKDKKLSWDVHFWLGLETSTDEAG) form a Gelsolin-like 1 repeat. Tyr-90 is subject to Phosphotyrosine; by SRC. The actin-actin interfilament contact point stretch occupies residues 128-131 (DEAG). A 1,2-diacyl-sn-glycero-3-phospho-(1D-myo-inositol-4,5-bisphosphate) contacts are provided by residues 167–174 (KNGIRYEQ) and 193–201 (RLFQVKGKR). Gelsolin-like repeat units lie at residues 203-243 (VRVR…VEKL), 322-365 (LKVD…KEKT), 474-524 (IVVS…AARK), and 583-625 (VHAS…FEKQ). The actin-binding, Ca-sensitive stretch occupies residues 451 to 792 (MPDHGQNVIE…SYEDMKQLVI (342 aa)). Asp-599 is a binding site for Ca(2+). Tyr-612 carries the post-translational modification Phosphotyrosine; by SRC. Glu-623 is a binding site for Ca(2+). Tyr-662 carries the post-translational modification Phosphotyrosine; by SRC. One copy of the Gelsolin-like 6 repeat lies at 689-730 (LKVEEVAQYEQEDLDSDDIMLLDAGDEIYLWVGYGVSEEENG). Residues Asp-705, Asp-706, and Glu-728 each contribute to the Ca(2+) site.

The protein belongs to the villin/gelsolin family. Binds to actin and to fibronectin. Isoform 1 and isoform 2 are ubiquitously expressed in early embryo. Isoform 1 is expressed in the fat body, and is abundant in hemolymph. Isoform 2 is expressed in parts of the gut.

The protein resides in the cytoplasm. It is found in the cytoskeleton. The protein localises to the secreted. Its function is as follows. Calcium-regulated, actin-modulating protein that binds to the plus (or barbed) ends of actin monomers or filaments, preventing monomer exchange (end-blocking or capping). It can promote the assembly of monomers into filaments (nucleation) as well as sever filaments already formed. The chain is Gelsolin (Gel) from Drosophila melanogaster (Fruit fly).